A 117-amino-acid chain; its full sequence is Big defensin (117 aa).

Residues 1 to 23 form the signal peptide; that stretch reads MKGNIGIAVFYMLLLLLPTDSIG. Residues 26-36 constitute a propeptide that is removed on maturation; sequence MEEEQEKLFRQ. Intrachain disulfides connect C83/C113, C90/C108, and C94/C114.

Belongs to the big defensin family. In terms of assembly, interacts with intracellular coagulation inhibitor 1/LICI-1. In terms of tissue distribution, expressed in all tissues examined, including hemocytes, heart, hepatopancreas, stomach, intestine and skeletal muscle.

It localises to the secreted. Functionally, significantly inhibits the growth of Gram-negative and Gram-positive bacteria and fungi in vitro. The chain is Big defensin from Tachypleus tridentatus (Japanese horseshoe crab).